We begin with the raw amino-acid sequence, 181 residues long: Adenylate kinase (181 aa).

10-15 serves as a coordination point for ATP; sequence GAGKGT. The NMP stretch occupies residues 30–59; the sequence is STGELFRKNIQDGTKLGVEAKRYLDAGDLV. AMP is bound by residues threonine 31, arginine 36, 57-59, 85-88, and glutamine 92; these read DLV and GYPR. The LID stretch occupies residues 126–132; the sequence is GRGRADD. Arginine 127 serves as a coordination point for ATP. Residues arginine 129 and arginine 140 each coordinate AMP. Residue glycine 166 coordinates ATP.

It belongs to the adenylate kinase family. In terms of assembly, monomer.

The protein localises to the cytoplasm. The enzyme catalyses AMP + ATP = 2 ADP. Its pathway is purine metabolism; AMP biosynthesis via salvage pathway; AMP from ADP: step 1/1. Catalyzes the reversible transfer of the terminal phosphate group between ATP and AMP. Plays an important role in cellular energy homeostasis and in adenine nucleotide metabolism. In Mycobacterium ulcerans (strain Agy99), this protein is Adenylate kinase.